A 222-amino-acid chain; its full sequence is GTP cyclohydrolase 1 (222 aa).

The Zn(2+) site is built by Cys-111, His-114, and Cys-182.

Belongs to the GTP cyclohydrolase I family. As to quaternary structure, toroid-shaped homodecamer, composed of two pentamers of five dimers.

It carries out the reaction GTP + H2O = 7,8-dihydroneopterin 3'-triphosphate + formate + H(+). Its pathway is cofactor biosynthesis; 7,8-dihydroneopterin triphosphate biosynthesis; 7,8-dihydroneopterin triphosphate from GTP: step 1/1. The sequence is that of GTP cyclohydrolase 1 from Citrobacter koseri (strain ATCC BAA-895 / CDC 4225-83 / SGSC4696).